The sequence spans 827 residues: NT-3 growth factor receptor (827 aa).

The N-terminal stretch at 1-31 is a signal peptide; that stretch reads MDVSLCPTKCTFWRVFLLWSIWGDYLLSVLA. 2 cysteine pairs are disulfide-bonded: cysteine 32-cysteine 38 and cysteine 36-cysteine 45. Over 32–430 the chain is Extracellular; sequence CPANCLCSKT…ITVTHKPEED (399 aa). Asparagine 68, asparagine 72, and asparagine 79 each carry an N-linked (GlcNAc...) asparagine glycan. LRR repeat units lie at residues 104–125 and 128–149; these read GLQR…AFAK and HLRY…LFQT. The LRRCT domain maps to 160 to 209; it reads NPFNCSCDIRWIQLWQEKGEANLQSQQLHCMNLDTAVILLRNMNITQCDL. N-linked (GlcNAc...) asparagine glycosylation is present at asparagine 163. 2 cysteine pairs are disulfide-bonded: cysteine 164–cysteine 189 and cysteine 166–cysteine 207. 7 N-linked (GlcNAc...) asparagine glycosylation sites follow: asparagine 203, asparagine 218, asparagine 232, asparagine 259, asparagine 267, asparagine 272, and asparagine 294. Ig-like C2-type domains lie at 210-300 and 319-382; these read PEIS…VLLT and HCIA…VATN. Residues cysteine 231 and cysteine 284 are joined by a disulfide bond. Cysteine 320 and cysteine 362 are oxidised to a cystine. Residues asparagine 375 and asparagine 388 are each glycosylated (N-linked (GlcNAc...) asparagine). A helical membrane pass occupies residues 431–455; the sequence is TFGVSIAVGLAAFACVLLVVLFIMI. At 456-827 the chain is on the cytoplasmic side; it reads NKYGRRSKFG…ATPIYLDILG (372 aa). Residue tyrosine 518 is modified to Phosphotyrosine; by autocatalysis. Residues 540–812 form the Protein kinase domain; it reads IVLKRELGEG…LNIKEIYKIL (273 aa). Residues 546–554 and lysine 574 contribute to the ATP site; that span reads LGEGAFGKV. Aspartate 681 acts as the Proton acceptor in catalysis. Residues tyrosine 707, tyrosine 711, tyrosine 712, and tyrosine 822 each carry the phosphotyrosine; by autocatalysis modification.

The protein belongs to the protein kinase superfamily. Tyr protein kinase family. Insulin receptor subfamily. As to quaternary structure, exists in a dynamic equilibrium between monomeric (low affinity) and dimeric (high affinity) structures. Interacts with PTPRS. In terms of processing, ligand-mediated auto-phosphorylation.

The protein resides in the membrane. The enzyme catalyses L-tyrosyl-[protein] + ATP = O-phospho-L-tyrosyl-[protein] + ADP + H(+). Its function is as follows. Receptor tyrosine kinase involved in nervous system and probably heart development. Upon binding of its ligand NTF3/neurotrophin-3, NTRK3 autophosphorylates and activates different signaling pathways, including the phosphatidylinositol 3-kinase/AKT and the MAPK pathways, that control cell survival and differentiation. The KT and KD isoforms fail to stimulate transformation, process outgrowth or survival. Isoform KI25 exhibits tyrosine phosphorylation in the absence of ligand and is unable to mediate survival of neuronal cells. The chain is NT-3 growth factor receptor (NTRK3) from Gallus gallus (Chicken).